The primary structure comprises 137 residues: MADTMQFDLVSPERSLASLQARAVQIPGAEGDMTAMPLHAPTLTTLRPGILKVDAPEGTTEYLVTGGFAQITAEGLSVLAERAIPMDEMTRAHLDELIEEARTMYKTAQEDNSEHGLVEDAAKMLADMEALGTHMSL.

It belongs to the ATPase epsilon chain family. F-type ATPases have 2 components, CF(1) - the catalytic core - and CF(0) - the membrane proton channel. CF(1) has five subunits: alpha(3), beta(3), gamma(1), delta(1), epsilon(1). CF(0) has three main subunits: a, b and c.

It localises to the cell inner membrane. Produces ATP from ADP in the presence of a proton gradient across the membrane. This is ATP synthase epsilon chain from Ruegeria sp. (strain TM1040) (Silicibacter sp.).